We begin with the raw amino-acid sequence, 373 residues long: 4-hydroxy-3-methylbut-2-en-1-yl diphosphate synthase (flavodoxin) (373 aa).

Residues cysteine 270, cysteine 273, cysteine 305, and glutamate 312 each coordinate [4Fe-4S] cluster.

It belongs to the IspG family. Requires [4Fe-4S] cluster as cofactor.

It carries out the reaction (2E)-4-hydroxy-3-methylbut-2-enyl diphosphate + oxidized [flavodoxin] + H2O + 2 H(+) = 2-C-methyl-D-erythritol 2,4-cyclic diphosphate + reduced [flavodoxin]. Its pathway is isoprenoid biosynthesis; isopentenyl diphosphate biosynthesis via DXP pathway; isopentenyl diphosphate from 1-deoxy-D-xylulose 5-phosphate: step 5/6. Functionally, converts 2C-methyl-D-erythritol 2,4-cyclodiphosphate (ME-2,4cPP) into 1-hydroxy-2-methyl-2-(E)-butenyl 4-diphosphate. In Serratia proteamaculans (strain 568), this protein is 4-hydroxy-3-methylbut-2-en-1-yl diphosphate synthase (flavodoxin).